Consider the following 511-residue polypeptide: GMP synthase [glutamine-hydrolyzing] (511 aa).

Positions 3 to 198 constitute a Glutamine amidotransferase type-1 domain; sequence SVLVLDFGSQ…LLNIAAITPD (196 aa). Cysteine 80 acts as the Nucleophile in catalysis. Active-site residues include histidine 172 and glutamate 174. The region spanning 199–386 is the GMPS ATP-PPase domain; sequence WSSKSFIEHQ…LGIPEDILMR (188 aa). 226 to 232 contacts ATP; sequence SGGVDST.

Homodimer.

The enzyme catalyses XMP + L-glutamine + ATP + H2O = GMP + L-glutamate + AMP + diphosphate + 2 H(+). It functions in the pathway purine metabolism; GMP biosynthesis; GMP from XMP (L-Gln route): step 1/1. Its function is as follows. Catalyzes the synthesis of GMP from XMP. The chain is GMP synthase [glutamine-hydrolyzing] from Chlorobium chlorochromatii (strain CaD3).